A 130-amino-acid chain; its full sequence is Large ribosomal subunit protein bL20 (130 aa).

The protein belongs to the bacterial ribosomal protein bL20 family.

Functionally, binds directly to 23S ribosomal RNA and is necessary for the in vitro assembly process of the 50S ribosomal subunit. It is not involved in the protein synthesizing functions of that subunit. The protein is Large ribosomal subunit protein bL20 of Leifsonia xyli subsp. xyli (strain CTCB07).